The sequence spans 208 residues: High frequency lysogenization protein HflD homolog (208 aa).

This sequence belongs to the HflD family.

Its subcellular location is the cytoplasm. It is found in the cell inner membrane. This chain is High frequency lysogenization protein HflD homolog, found in Yersinia enterocolitica serotype O:8 / biotype 1B (strain NCTC 13174 / 8081).